The primary structure comprises 431 residues: Adenylosuccinate synthetase (431 aa).

GTP contacts are provided by residues 12 to 18 (GDEGKGK) and 40 to 42 (GHT). Asp13 serves as the catalytic Proton acceptor. Residues Asp13 and Gly40 each coordinate Mg(2+). Residues 13 to 16 (DEGK), 38 to 41 (NAGH), Thr130, Arg144, Gln225, Thr240, and Arg304 contribute to the IMP site. Residue His41 is the Proton donor of the active site. 300-306 (STTGRPR) contacts substrate. Residues Arg306, 332 to 334 (KMD), and 414 to 416 (SIG) contribute to the GTP site.

The protein belongs to the adenylosuccinate synthetase family. As to quaternary structure, homodimer. Mg(2+) is required as a cofactor.

It is found in the cytoplasm. It carries out the reaction IMP + L-aspartate + GTP = N(6)-(1,2-dicarboxyethyl)-AMP + GDP + phosphate + 2 H(+). The protein operates within purine metabolism; AMP biosynthesis via de novo pathway; AMP from IMP: step 1/2. In terms of biological role, plays an important role in the de novo pathway of purine nucleotide biosynthesis. Catalyzes the first committed step in the biosynthesis of AMP from IMP. In Syntrophotalea carbinolica (strain DSM 2380 / NBRC 103641 / GraBd1) (Pelobacter carbinolicus), this protein is Adenylosuccinate synthetase.